Here is a 513-residue protein sequence, read N- to C-terminus: MSDTTLEKIIVLDYGSQYNQLIARRIREIGVFSELMSHKVTAKEIREINPIGIILSGGPNSVYDEGSFDIDPEIFELGLPVLGICYGMQLMSYKLGGMVEAAGEREYGVAPLQLTEKSALFAGTPEVQDVLMSHGDRVTAIPEGFHVVGTSPNSPFAAVENTERNLYGIQFHPEVRHSVHGTEMLRNFALNICGAKGNWSMENFIDMQIKDIREKVGDKKVLLGLSGGVDSSVVGVLLQRAIGDQLTSIFVDHGFLRKGEADQVMETLGGKFGLNIIKVDAQKRFMDKLVGLSDPETKRKIIGNEFVYVFDDEANKLEGVDFLAQGTLYTDVIESGTDTAQTIKSHHNVGGLPEDMQFQLIEPLNTLFKDEVRALGTQLGMPDEIVWRQPFPGPGLAIRVLGDLTEEKLETVRESDAILREEIAASGLERDVWQYFTVNTDVKSVGVMGDQRTYDYTLAIRAITSIDGMTADFAQLPWDLLQKISKRIVNEVDHVNRIVYDITSKPPATVEWQ.

The Glutamine amidotransferase type-1 domain maps to 8–198 (KIIVLDYGSQ…ALNICGAKGN (191 aa)). The active-site Nucleophile is the Cys-85. Catalysis depends on residues His-172 and Glu-174. Residues 199–388 (WSMENFIDMQ…LGMPDEIVWR (190 aa)) form the GMPS ATP-PPase domain. 226-232 (SGGVDSS) lines the ATP pocket.

In terms of assembly, homodimer.

It carries out the reaction XMP + L-glutamine + ATP + H2O = GMP + L-glutamate + AMP + diphosphate + 2 H(+). It functions in the pathway purine metabolism; GMP biosynthesis; GMP from XMP (L-Gln route): step 1/1. In terms of biological role, catalyzes the synthesis of GMP from XMP. The polypeptide is GMP synthase [glutamine-hydrolyzing] (guaA) (Lactococcus lactis subsp. cremoris (strain MG1363)).